The chain runs to 277 residues: Energy-coupling factor transporter ATP-binding protein EcfA1 (277 aa).

Positions 5–242 constitute an ABC transporter domain; sequence VKVNNISFEY…IKMLKEIGLD (238 aa). Residue 41–48 coordinates ATP; it reads GHNGSGKS.

It belongs to the ABC transporter superfamily. Energy-coupling factor EcfA family. As to quaternary structure, forms a stable energy-coupling factor (ECF) transporter complex composed of 2 membrane-embedded substrate-binding proteins (S component), 2 ATP-binding proteins (A component) and 2 transmembrane proteins (T component).

The protein localises to the cell membrane. In terms of biological role, ATP-binding (A) component of a common energy-coupling factor (ECF) ABC-transporter complex. Unlike classic ABC transporters this ECF transporter provides the energy necessary to transport a number of different substrates. The protein is Energy-coupling factor transporter ATP-binding protein EcfA1 of Clostridioides difficile (strain 630) (Peptoclostridium difficile).